The following is a 130-amino-acid chain: Small ribosomal subunit protein uS11 (130 aa).

The protein belongs to the universal ribosomal protein uS11 family. Part of the 30S ribosomal subunit. Interacts with proteins S7 and S18. Binds to IF-3.

Located on the platform of the 30S subunit, it bridges several disparate RNA helices of the 16S rRNA. Forms part of the Shine-Dalgarno cleft in the 70S ribosome. This Campylobacter fetus subsp. fetus (strain 82-40) protein is Small ribosomal subunit protein uS11.